A 159-amino-acid polypeptide reads, in one-letter code: 2-C-methyl-D-erythritol 2,4-cyclodiphosphate synthase (159 aa).

A divalent metal cation-binding residues include aspartate 10 and histidine 12. Residues 10-12 (DVH) and 36-37 (HS) contribute to the 4-CDP-2-C-methyl-D-erythritol 2-phosphate site. Residue histidine 44 coordinates a divalent metal cation. 4-CDP-2-C-methyl-D-erythritol 2-phosphate is bound by residues 58 to 60 (DIG), 63 to 67 (FPDTD), 102 to 108 (AQAPKMA), 134 to 137 (TTTE), phenylalanine 141, and arginine 144.

It belongs to the IspF family. Homotrimer. A divalent metal cation serves as cofactor.

The enzyme catalyses 4-CDP-2-C-methyl-D-erythritol 2-phosphate = 2-C-methyl-D-erythritol 2,4-cyclic diphosphate + CMP. It functions in the pathway isoprenoid biosynthesis; isopentenyl diphosphate biosynthesis via DXP pathway; isopentenyl diphosphate from 1-deoxy-D-xylulose 5-phosphate: step 4/6. Involved in the biosynthesis of isopentenyl diphosphate (IPP) and dimethylallyl diphosphate (DMAPP), two major building blocks of isoprenoid compounds. Catalyzes the conversion of 4-diphosphocytidyl-2-C-methyl-D-erythritol 2-phosphate (CDP-ME2P) to 2-C-methyl-D-erythritol 2,4-cyclodiphosphate (ME-CPP) with a corresponding release of cytidine 5-monophosphate (CMP). The chain is 2-C-methyl-D-erythritol 2,4-cyclodiphosphate synthase from Shewanella sp. (strain ANA-3).